A 259-amino-acid chain; its full sequence is Small ribosomal subunit protein mS23 (259 aa).

It belongs to the mitochondrion-specific ribosomal protein mS23 family. As to quaternary structure, component of the mitochondrial small ribosomal subunit.

Its subcellular location is the mitochondrion. The chain is Small ribosomal subunit protein mS23 (RSM25) from Pyricularia oryzae (strain 70-15 / ATCC MYA-4617 / FGSC 8958) (Rice blast fungus).